We begin with the raw amino-acid sequence, 302 residues long: 4-diphosphocytidyl-2-C-methyl-D-erythritol kinase (302 aa).

Residue Lys-11 is part of the active site. Pro-93–Thr-103 lines the ATP pocket. Asp-135 is a catalytic residue.

The protein belongs to the GHMP kinase family. IspE subfamily.

It catalyses the reaction 4-CDP-2-C-methyl-D-erythritol + ATP = 4-CDP-2-C-methyl-D-erythritol 2-phosphate + ADP + H(+). It participates in isoprenoid biosynthesis; isopentenyl diphosphate biosynthesis via DXP pathway; isopentenyl diphosphate from 1-deoxy-D-xylulose 5-phosphate: step 3/6. Its function is as follows. Catalyzes the phosphorylation of the position 2 hydroxy group of 4-diphosphocytidyl-2C-methyl-D-erythritol. This Gloeobacter violaceus (strain ATCC 29082 / PCC 7421) protein is 4-diphosphocytidyl-2-C-methyl-D-erythritol kinase.